Reading from the N-terminus, the 99-residue chain is A-type ATP synthase subunit F (99 aa).

It belongs to the V-ATPase F subunit family. In terms of assembly, has multiple subunits with at least A(3), B(3), C, D, E, F, H, I and proteolipid K(x).

The protein resides in the cell membrane. Component of the A-type ATP synthase that produces ATP from ADP in the presence of a proton gradient across the membrane. This chain is A-type ATP synthase subunit F, found in Methanococcus maripaludis (strain C6 / ATCC BAA-1332).